Consider the following 431-residue polypeptide: Putative F-box/FBD/LRR-repeat protein At4g26350 (431 aa).

The F-box domain occupies 1 to 47 (MDIISQCPDHLLLRILSFIPTKDVIVTSLLSKRWGSLWRWVPKLEYD). LRR repeat units lie at residues 52 to 78 (NMRF…HLKN), 85 to 109 (CRTV…EISI), 132 to 159 (ILTI…HLRC), 160 to 185 (IGWA…RLAR), and 309 to 334 (CTQG…TLTN). The FBD domain maps to 348-398 (CWKRPSSVPACLLSSLQAFTWSGYKGRQGDKEVVKYVLRNATGLKKRIFIS).

The sequence is that of Putative F-box/FBD/LRR-repeat protein At4g26350 from Arabidopsis thaliana (Mouse-ear cress).